We begin with the raw amino-acid sequence, 414 residues long: Esterase FrsA (414 aa).

This sequence belongs to the FrsA family.

The enzyme catalyses a carboxylic ester + H2O = an alcohol + a carboxylate + H(+). In terms of biological role, catalyzes the hydrolysis of esters. The chain is Esterase FrsA from Enterobacter sp. (strain 638).